The sequence spans 669 residues: Diacylglycerol lipase-beta (669 aa).

Over 1 to 17 the chain is Cytoplasmic; the sequence is MPGMVLFGRRWSLASDD. A helical transmembrane segment spans residues 18 to 38; the sequence is LVFPGSFELFLRVLWWIVSLT. Residues 39–58 are Extracellular-facing; that stretch reads LYLTHRRRLDCPGGVLLSTY. Residues 59–79 form a helical membrane-spanning segment; it reads LIVLLVLLAVIICTVLAIVCV. The Cytoplasmic segment spans residues 80–102; the sequence is SMRGTICNPGPRKSMSKLLYIRL. The helical transmembrane segment at 103–123 threads the bilayer; sequence ALFLPEMVWASLGAAWVAKGI. At 124-128 the chain is on the extracellular side; the sequence is QCDRT. The helical transmembrane segment at 129-149 threads the bilayer; that stretch reads VVIGIIATVIVSWIVIAATMV. Over 150–669 the chain is Cytoplasmic; that stretch reads TIIFVFDPLG…CPGQGGSSVP (520 aa). Catalysis depends on charge relay system residues S443 and D495. 3 positions are modified to phosphoserine: S570, S578, and S582.

It belongs to the AB hydrolase superfamily. Lipase family. It depends on Ca(2+) as a cofactor. Expressed in liver and immune cells such as macrophages and microglias. In embryonic brains present in axonal tracts, while in adults localizes to dendritic fields, correlating with the developmental change in requirement for 2-AG synthesis from the pre- to the postsynaptic compartment (at protein level).

It is found in the cell membrane. The catalysed reaction is a 1,2-diacyl-sn-glycerol + H2O = a 2-acylglycerol + a fatty acid + H(+). It catalyses the reaction 1-octadecanoyl-2-(5Z,8Z,11Z,14Z-eicosatetraenoyl)-sn-glycerol + H2O = 2-(5Z,8Z,11Z,14Z-eicosatetraenoyl)-glycerol + octadecanoate + H(+). The enzyme catalyses 1,2-di-(9Z-octadecenoyl)-sn-glycerol + H2O = 2-(9Z-octadecenoyl)-glycerol + (9Z)-octadecenoate + H(+). It carries out the reaction 1-(9Z-octadecenoyl)-2-(5Z,8Z,11Z,14Z-eicosatetraenoyl)-sn-glycerol + H2O = 2-(5Z,8Z,11Z,14Z-eicosatetraenoyl)-glycerol + (9Z)-octadecenoate + H(+). The catalysed reaction is 1-(9Z-octadecenoyl)-2-octadecanoyl-sn-glycerol + H2O = 2-octadecanoylglycerol + (9Z)-octadecenoate + H(+). It catalyses the reaction 1-(9Z-octadecenoyl)-2-(9Z,12Z-octadecadienoyl)-sn-glycerol + H2O = 2-(9Z,12Z-octadecadienoyl)-glycerol + (9Z)-octadecenoate + H(+). The enzyme catalyses 1-(9Z-octadecenoyl)-2-O-(5Z,8Z,11Z,14Z-eicosatetraenyl)-sn-glycerol + H2O = 2-O-(5Z,8Z,11Z,14Z)-eicosatetraenylglycerol + (9Z)-octadecenoate + H(+). It carries out the reaction a triacylglycerol + H2O = a diacylglycerol + a fatty acid + H(+). The catalysed reaction is 1,2,3-tri-(5Z,8Z,11Z,14Z-eicosatetraenoyl)-glycerol + H2O = 1,2-di-(5Z,8Z,11Z,14Z-eicosatetraenoyl)-glycerol + (5Z,8Z,11Z,14Z)-eicosatetraenoate + H(+). It catalyses the reaction 1,2,3-(4Z,7Z,10Z,13Z,16Z,19Z-docosahexaenoyl)-glycerol + H2O = 1,2-di-(4Z,7Z,10Z,13Z,16Z,19Z-docosahexaenoyl)-glycerol + (4Z,7Z,10Z,13Z,16Z,19Z)-docosahexaenoate + H(+). Its activity is regulated as follows. Inhibited by the 1,2,3-triazole urea covalent inhibitors KT109 and KT172. Inhibited by p-hydroxy-mercuri-benzoate and HgCl(2), but not by PMSF. Also inhibited by RHC80267, a drug that blocks 2-AG formation. In terms of biological role, lipase that catalyzes the hydrolysis of arachidonic acid (AA)-esterified diacylglycerols (DAGs) to produce the principal endocannabinoid, 2-arachidonoylglycerol (2-AG) which can be further cleaved by downstream enzymes to release arachidonic acid (AA) for cyclooxygenase (COX)-mediated eicosanoid production. Preferentially hydrolyzes DAGs at the sn-1 position in a calcium-dependent manner and has negligible activity against other lipids including monoacylglycerols and phospholipids. Plays a key role in the regulation of 2-AG and AA pools utilized by COX1/2 to generate lipid mediators of macrophage and microglia inflammatory responses. Also functions as a polyunsaturated fatty acids-specific triacylglycerol lipase in macrophages. Plays an important role to support the metabolic and signaling demands of macrophages. This is Diacylglycerol lipase-beta (Daglb) from Mus musculus (Mouse).